Consider the following 688-residue polypeptide: Protein sel-1 homolog 2 (688 aa).

Positions 1–23 are cleaved as a signal peptide; sequence MKPLSLLIEILIILGVTIKTIKA. Residues 24-662 are Extracellular-facing; that stretch reads EEHNKRQKER…RWNWLKLDNT (639 aa). Asn34 is a glycosylation site (N-linked (GlcNAc...) asparagine). Sel1-like repeat units lie at residues 107–142, 143–178, 179–214, 215–250, 297–333, 334–370, 371–406, 407–442, 443–478, 551–586, and 588–623; these read GDQLFKMGIKVLQQSKSQKQKEEAYLLFAKAADMGN, LKAMEKMADALLFGNFGVQNITAAIQLYESLAKEGS, CKAQNALGFLSSYGIGMEYDQAKALIYYTFGSAGGN, MMSQMILGYRYLSGINVLQNCEVALSYYKKVADYIA, VQIQVSLGQLHLIGRKGLDQDYYKALHYFLKAAKAGS, ANAMAFIGKMYLEGNAAVPQNNATAFKYFSMAASKGN, AIGLHGLGLLYFHGKGVPLNYAEALKYFQKAAEKGW, PDAQFQLGFMYYSGSGIWKDYKLAFKYFYLASQSGQ, PLAIYYLAKMYATGTGVVRSCRTAVELYKGVCELGH, AFARVKIGDYHYYGYGTKKDYQTAATHYSIAANKYH, and AQAMFNLAYMYEHGLGITKDIHLARRLYDMAAQTSP. A helical transmembrane segment spans residues 663–683; it reads IGPHWDLFVIGLIVPGLILLL. Residues 684–688 lie on the Cytoplasmic side of the membrane; that stretch reads RNHHG.

Belongs to the sel-1 family.

The protein resides in the membrane. It is found in the cell projection. The protein localises to the cilium. It localises to the nucleus speckle. This chain is Protein sel-1 homolog 2 (SEL1L2), found in Homo sapiens (Human).